A 409-amino-acid chain; its full sequence is MTTREKLEAARRAAPVVAELSTESKNALLLALARTIDERTEEILAANRADLEASGLDGSLRDRLLLTPERIATMAEGLREVAALADPVGETLAEWERPNGLRIRKVRVPLGVVAIIYEARPNVTIDVIGLALKSGNAVVLRGGKEAVRSNECLVKIAGATPGMPDGAIQLLDASNRESVQQLMKARGLVDVIVPRGGAGLIQFVVENSTVPVIETGAGNCHIFVDESANLDMADRIVINAKTQRPSVCNAAEKLLVHRAIAKEYVPRIVKLLLDHGVEVRGDAETLALAQGMQVAEATSADWDEEYLRLCMAVKVVADVDEAIAHINQHSTKHSESIITANDAHARRFLRAADSAAVYWNASTRFTDGAEFGFGAEMGISTQKLHCRGPFALAELTSSKYEVIGSGQVR.

This sequence belongs to the gamma-glutamyl phosphate reductase family.

It is found in the cytoplasm. The enzyme catalyses L-glutamate 5-semialdehyde + phosphate + NADP(+) = L-glutamyl 5-phosphate + NADPH + H(+). Its pathway is amino-acid biosynthesis; L-proline biosynthesis; L-glutamate 5-semialdehyde from L-glutamate: step 2/2. Functionally, catalyzes the NADPH-dependent reduction of L-glutamate 5-phosphate into L-glutamate 5-semialdehyde and phosphate. The product spontaneously undergoes cyclization to form 1-pyrroline-5-carboxylate. This Koribacter versatilis (strain Ellin345) protein is Gamma-glutamyl phosphate reductase.